Reading from the N-terminus, the 487-residue chain is Aspartyl/glutamyl-tRNA(Asn/Gln) amidotransferase subunit B (487 aa).

Belongs to the GatB/GatE family. GatB subfamily. Heterotrimer of A, B and C subunits.

The enzyme catalyses L-glutamyl-tRNA(Gln) + L-glutamine + ATP + H2O = L-glutaminyl-tRNA(Gln) + L-glutamate + ADP + phosphate + H(+). It carries out the reaction L-aspartyl-tRNA(Asn) + L-glutamine + ATP + H2O = L-asparaginyl-tRNA(Asn) + L-glutamate + ADP + phosphate + 2 H(+). Functionally, allows the formation of correctly charged Asn-tRNA(Asn) or Gln-tRNA(Gln) through the transamidation of misacylated Asp-tRNA(Asn) or Glu-tRNA(Gln) in organisms which lack either or both of asparaginyl-tRNA or glutaminyl-tRNA synthetases. The reaction takes place in the presence of glutamine and ATP through an activated phospho-Asp-tRNA(Asn) or phospho-Glu-tRNA(Gln). The polypeptide is Aspartyl/glutamyl-tRNA(Asn/Gln) amidotransferase subunit B (Roseiflexus sp. (strain RS-1)).